We begin with the raw amino-acid sequence, 265 residues long: Cell division protein FtsQ (265 aa).

Low complexity predominate over residues 1–13; it reads MAGATTAKGGARR. Positions 1-25 are disordered; sequence MAGATTAKGGARRTPPPGPPPPALK. The Cytoplasmic portion of the chain corresponds to 1–35; it reads MAGATTAKGGARRTPPPGPPPPALKARRRLRLPRR. Over residues 14–23 the composition is skewed to pro residues; that stretch reads TPPPGPPPPA. The chain crosses the membrane as a helical span at residues 36 to 58; it reads RTLLVTGVATALLGSGVTWLLYG. The Extracellular segment spans residues 59 to 265; the sequence is SSWLRVEQVA…APTAPAVTHS (207 aa). Residues 62 to 131 enclose the POTRA domain; it reads LRVEQVAVSG…DTIAVRVTER (70 aa).

This sequence belongs to the FtsQ/DivIB family. FtsQ subfamily.

The protein localises to the cell membrane. Essential cell division protein. In Streptomyces bingchenggensis (strain BCW-1), this protein is Cell division protein FtsQ.